The following is a 150-amino-acid chain: Large ribosomal subunit protein bL9 (150 aa).

Belongs to the bacterial ribosomal protein bL9 family.

Its function is as follows. Binds to the 23S rRNA. This chain is Large ribosomal subunit protein bL9, found in Vibrio campbellii (strain ATCC BAA-1116).